The following is a 172-amino-acid chain: NADH-ubiquinone oxidoreductase chain 6 (172 aa).

A run of 6 helical transmembrane segments spans residues 1 to 21 (MLSL…VVVL), 25 to 45 (PYFS…IVLY), 48 to 68 (GTFL…VVFV), 86 to 106 (VIWF…MSFN), 108 to 128 (FFLD…IFGA), and 141 to 161 (LILV…LVVV).

It belongs to the complex I subunit 6 family.

Its subcellular location is the mitochondrion membrane. The catalysed reaction is a ubiquinone + NADH + 5 H(+)(in) = a ubiquinol + NAD(+) + 4 H(+)(out). Core subunit of the mitochondrial membrane respiratory chain NADH dehydrogenase (Complex I) that is believed to belong to the minimal assembly required for catalysis. Complex I functions in the transfer of electrons from NADH to the respiratory chain. The immediate electron acceptor for the enzyme is believed to be ubiquinone. This chain is NADH-ubiquinone oxidoreductase chain 6 (MT-ND6), found in Petromyzon marinus (Sea lamprey).